Reading from the N-terminus, the 93-residue chain is Small ribosomal subunit protein uS19 (93 aa).

Belongs to the universal ribosomal protein uS19 family.

In terms of biological role, protein S19 forms a complex with S13 that binds strongly to the 16S ribosomal RNA. The polypeptide is Small ribosomal subunit protein uS19 (Wolinella succinogenes (strain ATCC 29543 / DSM 1740 / CCUG 13145 / JCM 31913 / LMG 7466 / NCTC 11488 / FDC 602W) (Vibrio succinogenes)).